The following is a 464-amino-acid chain: Phosphoenolpyruvate carboxylase (464 aa).

The protein belongs to the PEPCase type 2 family. Homotetramer. Mg(2+) is required as a cofactor.

The enzyme catalyses oxaloacetate + phosphate = phosphoenolpyruvate + hydrogencarbonate. Catalyzes the irreversible beta-carboxylation of phosphoenolpyruvate (PEP) to form oxaloacetate (OAA), a four-carbon dicarboxylic acid source for the tricarboxylic acid cycle. This chain is Phosphoenolpyruvate carboxylase, found in Thermofilum pendens (strain DSM 2475 / Hrk 5).